The primary structure comprises 285 residues: Energy-coupling factor transporter ATP-binding protein EcfA1 (285 aa).

The 238-residue stretch at 9–246 folds into the ABC transporter domain; it reads VTVEHLSFTY…VSLIKNAGLD (238 aa). 43–50 provides a ligand contact to ATP; the sequence is GHNGSGKS.

This sequence belongs to the ABC transporter superfamily. Energy-coupling factor EcfA family. In terms of assembly, forms a stable energy-coupling factor (ECF) transporter complex composed of 2 membrane-embedded substrate-binding proteins (S component), 2 ATP-binding proteins (A component) and 2 transmembrane proteins (T component).

The protein localises to the cell membrane. Its function is as follows. ATP-binding (A) component of a common energy-coupling factor (ECF) ABC-transporter complex. Unlike classic ABC transporters this ECF transporter provides the energy necessary to transport a number of different substrates. The polypeptide is Energy-coupling factor transporter ATP-binding protein EcfA1 (Lactobacillus gasseri (strain ATCC 33323 / DSM 20243 / BCRC 14619 / CIP 102991 / JCM 1131 / KCTC 3163 / NCIMB 11718 / NCTC 13722 / AM63)).